A 137-amino-acid chain; its full sequence is MPTINQLVRKPRKPRTFKSKVPALNFGYNSMSRKQTNNTAPQKRGVATRVGTMTPKKPNSALRKYARVRLSNQYEVTAYIPGIGHNLQEHSVVLIRGGRVKDLPGVRYHIIRGALDTAGVEGRMNGRSKYGAKRPKK.

Polar residues predominate over residues 31 to 41 (MSRKQTNNTAP). Residues 31 to 57 (MSRKQTNNTAPQKRGVATRVGTMTPKK) form a disordered region. Asp102 carries the 3-methylthioaspartic acid modification.

The protein belongs to the universal ribosomal protein uS12 family. In terms of assembly, part of the 30S ribosomal subunit. Contacts proteins S8 and S17. May interact with IF1 in the 30S initiation complex.

In terms of biological role, with S4 and S5 plays an important role in translational accuracy. Functionally, interacts with and stabilizes bases of the 16S rRNA that are involved in tRNA selection in the A site and with the mRNA backbone. Located at the interface of the 30S and 50S subunits, it traverses the body of the 30S subunit contacting proteins on the other side and probably holding the rRNA structure together. The combined cluster of proteins S8, S12 and S17 appears to hold together the shoulder and platform of the 30S subunit. The chain is Small ribosomal subunit protein uS12 from Oenococcus oeni (strain ATCC BAA-331 / PSU-1).